The sequence spans 161 residues: Peripheral myelin protein 22 (161 aa).

Residue Met-1 is a topological domain, cytoplasmic. Residues 2–31 (LLLLLGILFLHIAVLVLLFVSTIVSQWLVG) traverse the membrane as a helical segment. Residues 32–64 (NGHTTDLWQNCTTSALGAVQHCYSSSVSEWLQS) lie on the Extracellular side of the membrane. An N-linked (GlcNAc...) asparagine glycan is attached at Asn-41. A helical transmembrane segment spans residues 65-91 (VQATMILSVIFSVLALFLFFCQLFTLT). Topologically, residues 92 to 95 (KGGR) are cytoplasmic. Residues 96-119 (FYITGFFQILAGLCVMSAAAIYTV) traverse the membrane as a helical segment. Residues 120-133 (RHSEWHVNTDYSYG) are Extracellular-facing. A helical transmembrane segment spans residues 134 to 156 (FAYILAWVAFPLALLSGIIYVIL). Topologically, residues 157-160 (RKRE) are cytoplasmic.

Belongs to the PMP-22/EMP/MP20 family. In terms of processing, ubiquitinated by the DCX(DCAF13) E3 ubiquitin ligase complex, leading to its degradation. As to expression, schwann cells of the peripheral nervous system. Expressed at growth arrest of mammalian fibroblasts.

It localises to the cell membrane. Functionally, might be involved in growth regulation, and in myelinization in the peripheral nervous system. This is Peripheral myelin protein 22 (Pmp22) from Mus musculus (Mouse).